The sequence spans 311 residues: Lipoyl synthase (311 aa).

Cys55, Cys60, Cys66, Cys81, Cys85, Cys88, and Ser292 together coordinate [4Fe-4S] cluster. Positions 67–281 constitute a Radical SAM core domain; the sequence is WEDREATFLI…ARFAEGLGFA (215 aa).

Belongs to the radical SAM superfamily. Lipoyl synthase family. Requires [4Fe-4S] cluster as cofactor.

It is found in the cytoplasm. It catalyses the reaction [[Fe-S] cluster scaffold protein carrying a second [4Fe-4S](2+) cluster] + N(6)-octanoyl-L-lysyl-[protein] + 2 oxidized [2Fe-2S]-[ferredoxin] + 2 S-adenosyl-L-methionine + 4 H(+) = [[Fe-S] cluster scaffold protein] + N(6)-[(R)-dihydrolipoyl]-L-lysyl-[protein] + 4 Fe(3+) + 2 hydrogen sulfide + 2 5'-deoxyadenosine + 2 L-methionine + 2 reduced [2Fe-2S]-[ferredoxin]. The protein operates within protein modification; protein lipoylation via endogenous pathway; protein N(6)-(lipoyl)lysine from octanoyl-[acyl-carrier-protein]: step 2/2. Functionally, catalyzes the radical-mediated insertion of two sulfur atoms into the C-6 and C-8 positions of the octanoyl moiety bound to the lipoyl domains of lipoate-dependent enzymes, thereby converting the octanoylated domains into lipoylated derivatives. This Mycobacterium bovis (strain ATCC BAA-935 / AF2122/97) protein is Lipoyl synthase.